Consider the following 1696-residue polypeptide: Proprotein convertase subtilisin/kexin type 5 (1696 aa).

Residues 1 to 25 (MPPAIVILALFTAALCAVNLRTVAA) form the signal peptide. Residues 26 to 110 (DGPRIYRNEW…QQVVKRRVKR (85 aa)) constitute a propeptide that is removed on maturation. The tract at residues 111–488 (RVKRVYSMYP…GLMDAGKMVE (378 aa)) is catalytic. Over 111-1618 (RVKRVYSMYP…ADSIPTNVAY (1508 aa)) the chain is Extracellular. In terms of domain architecture, Peptidase S8 spans 167–487 (QWSDMNVEAA…FGLMDAGKMV (321 aa)). Residues D192 and H233 each act as charge relay system in the active site. N-linked (GlcNAc...) asparagine glycosylation occurs at N246. The Charge relay system role is filled by S407. Residues 495 to 638 (RVPEQHVCEE…KLILYGTAEH (144 aa)) form the P/Homo B domain. N-linked (GlcNAc...) asparagine glycosylation occurs at N529. Residues 643–657 (RDEESRPHTPQTREE) show a composition bias toward basic and acidic residues. A disordered region spans residues 643–666 (RDEESRPHTPQTREEPTDEEECED). Residues 664 to 1649 (CEDGDYYDRS…LQARSNGRLC (986 aa)) form a CRM (Cys-rich motif) region. An N-linked (GlcNAc...) asparagine glycan is attached at N885. A helical transmembrane segment spans residues 1619-1639 (IAVATFICVVIVVLFFVVFGM). The Cytoplasmic portion of the chain corresponds to 1640 to 1696 (LQARSNGRLCWAHKYQQVPTTRYEKMNDHVNILSQEDFYNEDSLSEDEIHSIDSTRH).

This sequence belongs to the peptidase S8 family.

The protein localises to the secreted. It localises to the cell membrane. Serine endoprotease that processes various proproteins by cleavage at paired basic amino acids, recognizing the RXXX[KR]R consensus motif. Likely functions in the constitutive and regulated secretory pathways. The chain is Proprotein convertase subtilisin/kexin type 5 (PC6) from Branchiostoma californiense (California lancelet).